The chain runs to 546 residues: Parathyroid hormone 2 receptor (546 aa).

The signal sequence occupies residues M1–A24. Topologically, residues D27 to Y143 are extracellular. Residues N51, N106, N116, and N121 are each glycosylated (N-linked (GlcNAc...) asparagine). Residues I144 to F167 form a helical membrane-spanning segment. The Cytoplasmic segment spans residues R168 to R174. A helical membrane pass occupies residues N175–V194. Residues K195–K235 lie on the Extracellular side of the membrane. The helical transmembrane segment at I236 to Y258 threads the bilayer. The Cytoplasmic segment spans residues L259–Y273. A helical membrane pass occupies residues L274 to A295. The Extracellular portion of the chain corresponds to R296–W313. A helical membrane pass occupies residues I314–V334. Residues R335–S361 are Cytoplasmic-facing. A helical membrane pass occupies residues T362–P380. At H381 to R391 the chain is on the extracellular side. Residues M392 to N414 form a helical membrane-spanning segment. Topologically, residues G415–I546 are cytoplasmic. The segment at S497 to I546 is disordered. 2 stretches are compositionally biased toward basic and acidic residues: residues P506 to D519 and E537 to I546.

This sequence belongs to the G-protein coupled receptor 2 family. Binds to TIPF39/TIP39.

Its subcellular location is the cell membrane. Its function is as follows. This is a specific receptor for parathyroid hormone. The activity of this receptor is mediated by G proteins which activate adenylyl cyclase. PTH2R may be responsible for PTH effects in a number of physiological systems. It may play a significant role in pancreatic function. PTH2R presence in neurons indicates that it may function as a neurotransmitter receptor. This Mus musculus (Mouse) protein is Parathyroid hormone 2 receptor (Pth2r).